The following is a 123-amino-acid chain: Immunoglobulin lambda variable 9-49 (123 aa).

The first 19 residues, 1–19, serve as a signal peptide directing secretion; sequence MAWAPLLLTLLSLLTGSLS. A framework-1 region spans residues 20 to 44; the sequence is QPVLTQPPSASASLGASVTLTCTLS. The Ig-like domain maps to 21-123; the sequence is PVLTQPPSAS…ADHGSGSNFV (103 aa). Cysteines 41 and 112 form a disulfide. A complementarity-determining-1 region spans residues 45–51; sequence SGYSNYK. The interval 52–68 is framework-2; the sequence is VDWYQQRPGKGPRFVMR. A complementarity-determining-2 region spans residues 69–76; it reads VGTGGIVG. The tract at residues 77 to 112 is framework-3; that stretch reads SKGDGIPDRFSVLGSGLNRYLTIKNIQEEDESDYHC. A Phosphotyrosine modification is found at Y96. Phosphothreonine is present on T98. Residues 113–123 form a complementarity-determining-3 region; the sequence is GADHGSGSNFV.

As to quaternary structure, immunoglobulins are composed of two identical heavy chains and two identical light chains; disulfide-linked.

It localises to the secreted. The protein localises to the cell membrane. Functionally, v region of the variable domain of immunoglobulin light chains that participates in the antigen recognition. Immunoglobulins, also known as antibodies, are membrane-bound or secreted glycoproteins produced by B lymphocytes. In the recognition phase of humoral immunity, the membrane-bound immunoglobulins serve as receptors which, upon binding of a specific antigen, trigger the clonal expansion and differentiation of B lymphocytes into immunoglobulins-secreting plasma cells. Secreted immunoglobulins mediate the effector phase of humoral immunity, which results in the elimination of bound antigens. The antigen binding site is formed by the variable domain of one heavy chain, together with that of its associated light chain. Thus, each immunoglobulin has two antigen binding sites with remarkable affinity for a particular antigen. The variable domains are assembled by a process called V-(D)-J rearrangement and can then be subjected to somatic hypermutations which, after exposure to antigen and selection, allow affinity maturation for a particular antigen. The protein is Immunoglobulin lambda variable 9-49 of Homo sapiens (Human).